The sequence spans 364 residues: Histidinol-phosphate aminotransferase (364 aa).

Lys226 carries the post-translational modification N6-(pyridoxal phosphate)lysine.

This sequence belongs to the class-II pyridoxal-phosphate-dependent aminotransferase family. Histidinol-phosphate aminotransferase subfamily. Homodimer. It depends on pyridoxal 5'-phosphate as a cofactor.

The catalysed reaction is L-histidinol phosphate + 2-oxoglutarate = 3-(imidazol-4-yl)-2-oxopropyl phosphate + L-glutamate. The protein operates within amino-acid biosynthesis; L-histidine biosynthesis; L-histidine from 5-phospho-alpha-D-ribose 1-diphosphate: step 7/9. In Campylobacter jejuni subsp. jejuni serotype O:6 (strain 81116 / NCTC 11828), this protein is Histidinol-phosphate aminotransferase.